The primary structure comprises 278 residues: Biotin synthase (278 aa).

In terms of domain architecture, Radical SAM core spans 1-227; sequence MQIMLCAISN…QSVVMVAGGR (227 aa). [4Fe-4S] cluster contacts are provided by C16, C20, and C23. The [2Fe-2S] cluster site is built by C60, C95, and C153.

Belongs to the radical SAM superfamily. Biotin synthase family. As to quaternary structure, homodimer. Requires [4Fe-4S] cluster as cofactor. It depends on [2Fe-2S] cluster as a cofactor.

It catalyses the reaction (4R,5S)-dethiobiotin + (sulfur carrier)-SH + 2 reduced [2Fe-2S]-[ferredoxin] + 2 S-adenosyl-L-methionine = (sulfur carrier)-H + biotin + 2 5'-deoxyadenosine + 2 L-methionine + 2 oxidized [2Fe-2S]-[ferredoxin]. It functions in the pathway cofactor biosynthesis; biotin biosynthesis; biotin from 7,8-diaminononanoate: step 2/2. Catalyzes the conversion of dethiobiotin (DTB) to biotin by the insertion of a sulfur atom into dethiobiotin via a radical-based mechanism. This Campylobacter jejuni subsp. jejuni serotype O:6 (strain 81116 / NCTC 11828) protein is Biotin synthase.